Consider the following 205-residue polypeptide: GTP cyclohydrolase 1 (205 aa).

Zn(2+) is bound by residues C95, H98, and C166.

It belongs to the GTP cyclohydrolase I family. Toroid-shaped homodecamer, composed of two pentamers of five dimers.

The catalysed reaction is GTP + H2O = 7,8-dihydroneopterin 3'-triphosphate + formate + H(+). The protein operates within cofactor biosynthesis; 7,8-dihydroneopterin triphosphate biosynthesis; 7,8-dihydroneopterin triphosphate from GTP: step 1/1. The chain is GTP cyclohydrolase 1 from Maricaulis maris (strain MCS10) (Caulobacter maris).